Here is a 6907-residue protein sequence, read N- to C-terminus: MELYLGACSKPAKVAVTKTVASVLAADTQQCRDGVHKTHFAGVGPAQLLDLPLGVKLPVIPGSNAVFYTTNFGEKLFRPSYGFNLTDPYCRLLENQYKSLHDPHLKAYYKRKDILKRLKKGGYITSNNKVVCTLRELNKYRQYLTSLKLDFERNYIKEQRILAKQLHNIPENNQIPQHCDVAQVQNWLLKEGTESIKDQERLMRHRYLDMISRKLEQLERTAEEQRLFLMDREERRQREHTRRKLTLRRKIEEEWKTKEMLLLTRMAEDVKREERIEEQQHRNREESDRKKQDLLEKKMAYHLQKMQDTGFNGEDIGKNTFKYRGQDGTHASPKNKKKTSEDIMLVYPAGDQNTYKETHGHTANAAHQRQNSSNNFTKKNSASVVYQADVQDNGINQKRDGMVSKNSSIFDDRGGINISGQGSIISAQVSPTRNFSRVSQAFLDPSKEEKETNADWDGRPTKRSSYLCESGPQAHATDPGIFSSPVYTNMQQNLLQNCLQEKVTSEELNIIIQNVMTWVVATVTSILYPAITKYEKRLQNNTYPVSDDSILSSDSSSFCSTCSEDFTYRSYTSATTKTFQAEPCAFVVDTSVRRPTTPIKPPPAHVEKTVVGKTCHIKGQSIISKHKYNKTNLLYSYPKLRSCKSDSHLLASFETGTKKSKDATTETDSLGSSLHCDKTAKAMDEMKNLKNVFVNFKCYLKGETEVILESILREIMSDLTQAIPSLSSVTAEVFVEQCEREKEILLSNAHIPSVASEIVENMLEKLESAVEKKCVEMFSQDLSVDIKPSLAASDELLTSSNGKPLKNSMPHTLDPMCDIAEDMVHAILEKLMTLVSFKQNEFLHLKDTNKLSCQQHKTDPICMFLQRAGKNKSSLESDEASLIVNEEVQNLISNIFSQSSLVAYIEEAINAILGYIQTELNNERIIASEETVVLLQLLEDILFQLHQEPVNESFQKSRQPRISSPSDTKEKYRLTGTRLSNSPRSGRPFPPINVPGMVLYSDDENEEIDNIVKNVLDSTFKDEKVKSQEQIPNHWFTKGNTCFECKRNIKPPTKPGSRSKAAFHDWELKTEPPSTNHEDILKKKLSSNKDISTFSQDQKHQIEKASENIVTSILKEMLKDISSVPFGHLDSKTGSEASVLVSEKPQGLSHQEWIDQMFSVSEISTVAQEITDSVLNILHKASNYISNTTKSSISSSVHQISLHNSDTEHIVKEAPNKYPLKTWFDSEKKMKYLSLFDVDPEKPPWLKSGKSEPKPVDDINDKIIRTIFKRLKSFICPKLHMGFKSSLRSQLSKYTAKIVNIVLCAIQNELELHKENLNLREIDHTKSLTDKGFFANTDKKLESLVTSIDDDILASPLLTCIYDMLLSSENAHQRSISLSSRKPKSATDSVDVQSILPNRQDKKSFHKYLATPCTHHSVNGGNHIKENAKLQVLERIGETLHEMLSKLLGTHLHSQLSCSQQSREMTNKNQKMAAALQSNIQLISKAILDYILAKLCGVDMDTSFASCGLKAISESLDIDNPSFASIIEKMAKSTKIISSIVSRRVQEDNKEETKSKAKPVAPVSSKTPSTKEMHPNKLKAVASDILNMVFAKLEGFANGHLEILGAINDGNKKSNKIGWEYESTNISRDTHEASFLSALYMHAKKVSSAILKVIQTELNVTSSDLKTSVENPPPETQILKYVVKLILDAVSSDMFNEMESEGGGIETYRYRPTYGSLPGGAESDSFLEDDAYTAKKIIDERSPQREEVKTRSLKQWALEKTLNKIEVKLKEPHISPIAPIIRNILNEIFQSTLINQLNVLSLSHSNFNGMPHNVDEPTPQTSVQFMDKMMDPLLSEADITIVTDNIVRTVFHKLYSAAMTERNVRENRYKTITFSANVSSHEHTYKGKSSVTALDENPCTFQSRFSVADKETKVNLAEDIVQAILTNLETFATSKVKSLFYSQVNFTVPVALPIQQDHSTLSKALSAKDSYSDEQFSCCSVDHTKSGKTNLCQLSLSKLNTYALQVARRNLQGIKQELDKERENPFLTHDIGISESIASQIVNALLDIISRKGKCDKNSSDKEIDLDQQKGVIEKLLNETKYRKVLQLQIQDTIEGILCDIYEKTLFQNNLSFATPTLKCSIADKHSEENSEMFMEGANKIIPKLSVPKSDVILISNDIVNIVLHNLSSAATLVINAKNPTSARLPLTFCDTFPKIDCQQPLKGSKTERKTERFSYSRNQKSAYADDNQITVVEKEDTQKSATDSCEENANFITKTIFKRLESFATERIDSLITLAFQSKEKSFVIPELENCKQNDSIFYDSSQVESDVNVLKISATETILSQELTDFTFVGRREKLGSTIHLSQARLKTYADVIASAILKLIKNDLDLEIQKIYPYQNNILFQENIIVSEIVDSMLKMLDDKRSVKEICFNSKENSNFSQLALSNEILLGHKEKERSTKQSLFTKYPLEQNQMILENKRQIIVLEEIFMRNGESKNKEKGELLIAVEELLNKLYQRVREVTGHLPPLNETANFISNSKIKTSDTTQKNSFQSHINSVANDIVESVLGKMYLVVVTSLYENNKSRTEVEISDHNDSLLMKPLRFRETKQAGKISNSPRYAISQAYSYVDSQNISVMENTLLPYLPLQVKKDLIQMVLNKITNFVSLPLKVSPKDNPKPCFKAHLKTRSKITTLPKFTKKTHLGLSAAKAKSKTKLGPGEKTLKDSRSKTAIGLSHIMSAGDAKNLLDTKLPTSELKIYAKDIIINILETIVKEFGKVKQTKALPSDQIIAAGKIVNTVLQELYVTNNCNLAYPMKSSHLRLSQGNIGTGSLPKQQACFYLENVSSQLEHIFPREGIFKKLFDKWQTESNDKENEKCKLLMIAENVLTEISIKAKELEYSLSLLNLPPLENCESRFYNHFKGASTRAEDTKAQINMFGREIVEMLLEKLQLCFLSQIPTPDSEETLSNSKEHITAKSKYGFPNKHSLSSLPIYNTKTKDQISVGSSNQIVQEIVETVLNMLESFVDLQFKHISKYEFSEIVKMPIENLSSIQQKLLNKKMLPKLQPLKMFSDKSESNTINFKENIQNILLRVHSFHSQLLTYAVNIISDMLAVIKNKLDNEISQMEPSSISILKENIVASEIIGTLMDQCTYFNESLIQNLSRESLFQGAENAYTVNQVELATNMKMFTSKLKEGSLGINPSQVSKTGFVFCSDEDMKEKYRVSSDLPTSVRSSVEDTVKNSEPTKRPDSETMPSCSTRNKVQDHRPRESNFGSFDQTMKGNSYLPEGSFLQKLLRKASDSTEAALKQVLSFIEMGKGENLRVFHYENLKPVVEPNQIQTTISPLKICLAAENIVNTVLSSCGFPSQPHTNENREIMKPFFISKQSSLSEVSGGQKDNEKSLLRMQDKKINYIPEEENENLEASREDSSFLQKLKKKEYPKIETVKEVEAFTFADHEMGSNEVHLIARHVTTSVVTYLKNFETTVFSEEKMSVSTWSRKKYESKQFLRNIYDDSSIYQCCEHLTESVLYHLTSSISDGTKKGREKEKAWEIQEATFSKIISIHSQVFESRSISIGELALCISEIIIKILFNNKIIQADIAQKMVAIPTKYTYCPGIVSGGFDDLFQDLLVGVIHVLSKEIEVDYHFESNVRNKSFSMHRNNSVPLCNKINRQASPRDWQFSTQQIGQLFQKNKLSYLACKLNSLVGNLKTSESKEVVNKVFNIVSDLFSPDECLDTGMDSGKIQRTYFYSSNNEQPNSILTNNLQLSSKSVFLLNVVCEKLIRILLEECTSTAFPDKGSVSEETSAEECQLLKMLQSVEDGKSDYRKGGMDCECLQVDYMSDLLENVAEIDQDLLTSDSMLTIISHSLVKSLMDKLSHSIQQAPESLPFANKHLNYRTREIQSSFIKARKSELIELGQSKSSLELRSYDSNSLTVSLNNPSVVSSKIQAPFNKHCAVKSSSVSPFERQRTKEMDKVAIHNKLHQEGIYAGVYSATFLEGIISELFFNLSMSLWGKNKNITVSWLNEMNTLFVNNVVNEFNNAQVTVLRNAEERLCFPPVHTETVSKIVDSVYYDVLQQYELKVACGNNPVYDNASIAEQITNGILLEILDYKLPSCFKEHLIPHSYYPLKPEIILQKLQSNLTEFTSLPRSSSDYSTMLSHSFLEDVIRRLLSQLIPPPITCSSLGKKYLMSSDFNEMSTCIINKVMSAISKHKIWFTIYDNQYLYTGKNLQKMVDSVYCNILQMSDSLVSIQKSIVSRSPIMIDQIASFIIQEIIENHLQPFLSGEVLCHPRTPLDPVSTIVTQVLSEVIESHRPQKQSPLDIHLDSFVREIVARLLSKIFSPKHNTEIELKNMTQRIVNSINRHFNKAKIHILYDDKEQAFFSFNTDIVDELATSVYRNALKQHGLDLAVDKESEDSGIFVENITNLIVAAISDYLLHPLFSGDFSASTYSNSVAENIVQDILSNISKSTEPSQSVPLYNTLLPYTFLEDMIRVLLSKLFSSASSLVLNRDTQKDISRVNFNDIASNLVSDIRMKVSQHEIRFSKEEEETKFIYSEDDIQHLVDSVFANVVQTSGSQESAVQNITSSNDILIDRIAGFIIKHICQKHLQPFVSGKSLSSSDTYFDDERRQLFYTSVYSSTFLEDVISGVLRKIFHRVVGIVQTKSIRDSEDELFEKAEELIHLITGEFSKAQVSIIDNTEERLCLPPVERDVVKTIVDMVYSKVLQEYEMEVVPNKDFLNDTKTLAARITNIILAEIFDFQIHPDLIANLPFKSHSKLSANVLIQRVQYDISKSRFQRQASTMYTTMLSHSHLEKIVTQLTSQISPLNTSAEQSDTTKSDLSNTVIKLINEIMSIISKHEICIIKYGNKKQSMISAKDIQSMVDSIYADLSHSNIYQSITKDKKSISDIPVSKIASFIIKEIFNHHIQSFLSEDKTLLLAAVDQTYKLKAIDPKQRELSFIVNSSVFLEEVISELLCKILYAFSHNMLVTENPDRVKLKLTRIVTTLVNSIVLEFTTSEILVADNFDKNLCFSERYKEMVQKIVNSVYGKVLDQYKSLIQIHRVIQSDTICFGRKIYYLLLEEIYDYQVQSLVSGELESSSYSYPQADNIIRNVLNIITKDSHALPPYITVLPHSLLEDMVYRLLGHVFPSTHTENELKEKKFPPDDEFVEAASKLTDEIIKEISEHEIRLSMAEDNAESMQLEPIENLVDSICNNILKTSEFQAEVQKDADKKGCSFLSKLAGFIMKEIMYHHLQPFLHGEESSFSDLSDYDHVSELAKSGKEKTQPSLYSATFLEDIIIDLVHKFCSLLIITEDSKKNEMAELDIMGLALKLANSLIREFKKSDIKVLPNAEKMFSFPPIDKETVDKISNFVYEQFIEKCTSHDIQKGDESNIAIGMIAALTQKAISAFRIQPLFSGDWSSTFFSFLNPDNITQRVQHLPQNTFTQISRCAKENQLSLPDQSYKDTSSTPDCKNMMSTLEINRGTMNRKKSFKTKDTSVKKGDIQNPVLSSINAIMKSGMINLTSGLATGVTNKKEVDENKVGICTQKHSENVSKVTSTTTVKSKDTQEPNLSETFNNNEIEKKRNLIPTDKKGKDDEIYTHFSLIIDDTEYEKEVLGSDSEIGYKKKIDNARESSFKKDDKLFQLSSLKSKRNLGTTTDTLEIRIRTSSNEGRRDSPTQTCRDEEHHSDYEHVQNVIENIFEDVLELSSSPEPAYYSKLSYDQSPPGDNVLNVIQEISRDSAQSVTTKKVSSSTNKNISAKEKEEEEREKEKVREEIKSEPSKPDDPQNQRESKPGIFPAKFLEDVITEMVKQLIFSSIPETQIQDRCQNVSDKQNQAKLYDTAMKLINSLLKEFSDAQIKVFRPDKGNQFPGGKVSSVPKVPPRYKEPTTDEAPSSIKIKSADKMPPMHKMMRKPSSDKIPSIDKTLVNKVVHSSVCNILNDYGSQDSIWKNINSNGENLARRLTSAVINEIFQRQVNLIFCDEVSVSACLPLESKDVVKKVQKLAQTASKECQTSSPYTIILPHKFLENVISALFSKIFSTISSTKTKEPEDNLSTELNFLQMKLVSAVATEISQDKYMTIQYVETLQSDDDEIIQLVVQSVYNNLLPQFGSQEIIQNCVTSGCKILSENIVDLVLREVASNQLQSYFCGELTPHQCVEVENIVEKILKDVFQTTDVPLPKPSHADKLSYNIIEEIAVKFLSKLLSIFPKVHKERTKSLETDMQKITSKVLNSVQEFISKSKIKLVPPTKESPTVPVADNATIENIVNSIYTSVLKHSGSYTSVFKDLMGKSNVLSDTIGFLMVNAISNSEFQPQVEEEVSNSELVLEAVKIMEKVIKIIDELKSKEKSSSRKGLTLDAKLLEEVLALFLAKLIRLPSSSSKDEKNLSKTELNKIASQLSKLVTAEISRSSISLIASDPEEHCLNPENTERIYQVVDSVYSNILQQSGTNKEFYYDIKDTNTAFPKKVASLIIDGVSSFPLDTINSTISNADLSGELDVNRIVQKAQEHAFNVIPELEQEKLDQNLSEEESPIKIVPHVGKKPVKIDPKIISEHLAVISIKTQPLEKLKQECLKRTGHSIAELRRASISGRNYSLGSPDLEKRKTERRTSLDKTGRLDVKPLEAVARNSFQNIRKPDITKVELLKDVQSKNDLIVRLVAHDIDQVYLENYIKEERDSDEDEVVLTQTFAKEEGIKVFEDQVKEVKKPIQSKLSPKSTLSTSSLKKFLSLSKCCQTTASANIESTEAISNQVIESKETHVKRAVAELDMATPKTMPETASSSWEEKPQCKKEEKNLVTEPTHYFIHRIMSSSSYNQEDLISSTGEAEDCHSDPSAKILEESSQEQKPEHGNSVKFITIFERSKDVLGSANPSKEVISETPKPDVSKQGSKMLTKMSSTLSKVFSQCNTNISRSSSPAHQDEH.

Residues 273–292 (EERIEEQQHRNREESDRKKQ) form a disordered region. A Phosphoserine modification is found at Ser430. Disordered stretches follow at residues 439-472 (SQAF…ESGP), 954-990 (FQKS…RPFP), 1545-1573 (VQED…TKEM), 3202-3257 (VSSD…FDQT), 5650-5672 (RTSS…EHHS), 5725-5781 (SAQS…KPGI), 5850-5880 (DKGN…EAPS), and 6852-6874 (GSAN…KQGS). Residues 445–460 (PSKEEKETNADWDGRP) show a composition bias toward basic and acidic residues. The span at 954-966 (FQKSRQPRISSPS) shows a compositional bias: polar residues. Basic and acidic residues-rich tracts occupy residues 1545–1555 (VQEDNKEETKS) and 3213–3229 (SVED…RPDS). Residues 5728–5741 (SVTTKKVSSSTNKN) are compositionally biased toward low complexity. The stretch at 5738–5766 (TNKNISAKEKEEEEREKEKVREEIKSEPS) forms a coiled coil. Over residues 5743–5778 (SAKEKEEEEREKEKVREEIKSEPSKPDDPQNQRESK) the composition is skewed to basic and acidic residues.

As to quaternary structure, may interact with AKAP4. As to expression, predominantly expressed in testis.

In terms of biological role, plays a role in spermatogenesis. The sequence is that of Fibrous sheath-interacting protein 2 (FSIP2) from Homo sapiens (Human).